The primary structure comprises 468 residues: Tapasin-related protein (468 aa).

Residues 1–18 (MGTQEGWCLLLCLALSGA) form the signal peptide. Over 19 to 405 (AETKPHPAER…STQVVPPERR (387 aa)) the chain is Lumenal. The Ig-like V-type domain occupies 181–297 (PQGTVRTAVE…SLYRAQQIIQ (117 aa)). Disulfide bonds link Cys-212–Cys-283 and Cys-321–Cys-382. Asn-265 carries N-linked (GlcNAc...) asparagine glycosylation. Residues 304–394 (PKVRLSLANE…MHISLEEPLG (91 aa)) enclose the Ig-like C1-type domain. The helical transmembrane segment at 406–426 (TALGVIFASSLFLLALLFLGL) threads the bilayer. Residues 427–468 (QRRQAPTRVGLLQAERWKTTSCADTQSSHLHEDRTACVSQPS) are Cytoplasmic-facing.

Interacts with peptide-free HLA-A*02-B2M complexes or those loaded with low affinity peptides, likely facilitating peptide exchange onto higher affinity peptides. Interacts with MR1 in a ligand-independent way; this interaction may stabilize MR1 pool and facilitate ligand loading and dissociation.

It localises to the cell membrane. Its subcellular location is the endoplasmic reticulum membrane. It is found in the microsome membrane. The protein localises to the golgi apparatus membrane. In terms of biological role, component of the antigen processing and presentation pathway, which binds to MHC class I coupled with beta2-microglobulin/B2M. Association between TAPBPR and MHC class I occurs in the absence of a functional peptide-loading complex (PLC). Expression seems to slow down and down-regulate MHC class I surface expression. The sequence is that of Tapasin-related protein (TAPBPL) from Pongo abelii (Sumatran orangutan).